Here is a 391-residue protein sequence, read N- to C-terminus: Formate-dependent phosphoribosylglycinamide formyltransferase (391 aa).

N(1)-(5-phospho-beta-D-ribosyl)glycinamide contacts are provided by residues 20–21 (EL) and Glu-80. Residues Arg-112, Lys-153, 158–163 (SSGKGQ), 193–196 (EGFI), and Glu-201 each bind ATP. The ATP-grasp domain occupies 117 to 306 (RLAAEDLQIP…EFALHVRAFL (190 aa)). Residues Glu-265 and Glu-277 each coordinate Mg(2+). Residues Asp-284, Lys-354, and 361–362 (RR) each bind N(1)-(5-phospho-beta-D-ribosyl)glycinamide.

The protein belongs to the PurK/PurT family. As to quaternary structure, homodimer.

It carries out the reaction N(1)-(5-phospho-beta-D-ribosyl)glycinamide + formate + ATP = N(2)-formyl-N(1)-(5-phospho-beta-D-ribosyl)glycinamide + ADP + phosphate + H(+). Its pathway is purine metabolism; IMP biosynthesis via de novo pathway; N(2)-formyl-N(1)-(5-phospho-D-ribosyl)glycinamide from N(1)-(5-phospho-D-ribosyl)glycinamide (formate route): step 1/1. In terms of biological role, involved in the de novo purine biosynthesis. Catalyzes the transfer of formate to 5-phospho-ribosyl-glycinamide (GAR), producing 5-phospho-ribosyl-N-formylglycinamide (FGAR). Formate is provided by PurU via hydrolysis of 10-formyl-tetrahydrofolate. The sequence is that of Formate-dependent phosphoribosylglycinamide formyltransferase from Photobacterium profundum (strain SS9).